Here is a 675-residue protein sequence, read N- to C-terminus: tRNA 5-methylaminomethyl-2-thiouridine biosynthesis bifunctional protein MnmC (675 aa).

Residues M1–P245 are tRNA (mnm(5)s(2)U34)-methyltransferase. An FAD-dependent cmnm(5)s(2)U34 oxidoreductase region spans residues I271–D675.

It in the N-terminal section; belongs to the methyltransferase superfamily. tRNA (mnm(5)s(2)U34)-methyltransferase family. This sequence in the C-terminal section; belongs to the DAO family. Requires FAD as cofactor.

The protein resides in the cytoplasm. It catalyses the reaction 5-aminomethyl-2-thiouridine(34) in tRNA + S-adenosyl-L-methionine = 5-methylaminomethyl-2-thiouridine(34) in tRNA + S-adenosyl-L-homocysteine + H(+). Its function is as follows. Catalyzes the last two steps in the biosynthesis of 5-methylaminomethyl-2-thiouridine (mnm(5)s(2)U) at the wobble position (U34) in tRNA. Catalyzes the FAD-dependent demodification of cmnm(5)s(2)U34 to nm(5)s(2)U34, followed by the transfer of a methyl group from S-adenosyl-L-methionine to nm(5)s(2)U34, to form mnm(5)s(2)U34. The polypeptide is tRNA 5-methylaminomethyl-2-thiouridine biosynthesis bifunctional protein MnmC (Pectobacterium atrosepticum (strain SCRI 1043 / ATCC BAA-672) (Erwinia carotovora subsp. atroseptica)).